The chain runs to 609 residues: AARADGTMGFSSELCSPQGHGAEQQMQEAELRLLEGMRKWMAQRVKSDREYAGLLHHMSLQDGGGRGTGPYSPISQSWAEITSQTEGLSRLLRQHAEDLNSGPLSKLGLLIRERQQLRKTYSEQWQQLQQELTKTHNQDIEKLKSQYRALARDSAQARRKYQEASKDKDRDKAKLEQLGPGEPPPVLLLQDDRHSTSSSEQEREGGRTPTLEILKSHISGIFRPKFSLPPPLQLVPEVQKPLHEQLWYHGALPRAEVAELLTHSGDFLVRESQGKQEYVLSVLWDGQPRHFIIQSADNLYRPEGDGFASIPLLVDHLLRSQQPLTKKSGIVLNRAVPKDKWVLNHEDLVLGEQIGRGNFGEVFSGRLRADNTLVAVKSCRETLPPDIKAKFLQEAKILKQYSHPNIVRLIGVCTQKQPIYIVMELVQGGDFLTFLRTEGARLRMKTLLQMVGDAAAGMEYLESKCCIHRDLAARNCLVTEKNVLKISDFGMSREAADGIYAASGGLRQVPVKWTAPEALNYGRYSSESDVWSFGILLWETFSLGASPYPNLSNQQTREFVEKGGRLPCPELCPDAVFRLMEQCWAYEPGQRPSFSAIYQELQSIRKRHR.

Disordered stretches follow at residues 1–20 and 152–208; these read AARA…PQGH and RDSA…GGRT. One can recognise an F-BAR; degenerate domain in the interval 8–174; sequence MGFSSELCSP…SKDKDRDKAK (167 aa). Composition is skewed to basic and acidic residues over residues 160-175 and 190-206; these read KYQE…KAKL and QDDR…REGG. The 90-residue stretch at 247–336 folds into the SH2 domain; sequence WYHGALPRAE…KSGIVLNRAV (90 aa). A Protein kinase domain is found at 348–609; that stretch reads LVLGEQIGRG…ELQSIRKRHR (262 aa). ATP is bound by residues 354-362 and Lys377; that span reads IGRGNFGEV. The active-site Proton acceptor is Asp470. Phosphotyrosine; by autocatalysis is present on Tyr500.

Belongs to the protein kinase superfamily. Tyr protein kinase family. Fes/fps subfamily.

The catalysed reaction is L-tyrosyl-[protein] + ATP = O-phospho-L-tyrosyl-[protein] + ADP + H(+). This is Tyrosine-protein kinase transforming protein Fes (V-FES) from Felidae (cat family).